The following is a 278-amino-acid chain: Anamorsin homolog (278 aa).

The segment at 1-147 (MESVSHLVSN…EIGSSAALPF (147 aa)) is N-terminal SAM-like domain. The linker stretch occupies residues 147–191 (FANKISLGGNSKMETAKMWTLSSQDFVDDDIDIIDENTLIEEDDF). [2Fe-2S] cluster is bound by residues cysteine 204, cysteine 214, cysteine 217, and cysteine 219. Positions 204–219 (CDSAKKKRKACKNCSC) are fe-S binding site A. [4Fe-4S] cluster is bound by residues cysteine 239, cysteine 242, cysteine 250, and cysteine 253. 2 short sequence motifs (cx2C motif) span residues 239–242 (CGSC) and 250–253 (CSSC). The fe-S binding site B stretch occupies residues 239–253 (CGSCYLGDAFRCSSC).

The protein belongs to the anamorsin family. As to quaternary structure, monomer. [2Fe-2S] cluster is required as a cofactor. [4Fe-4S] cluster serves as cofactor.

It is found in the cytoplasm. The protein resides in the mitochondrion intermembrane space. In terms of biological role, component of the cytosolic iron-sulfur (Fe-S) protein assembly (CIA) machinery. Required for the maturation of extramitochondrial Fe-S proteins. Part of an electron transfer chain functioning in an early step of cytosolic Fe-S biogenesis, facilitating the de novo assembly of a [4Fe-4S] cluster on the cytosolic Fe-S scaffold complex. Electrons are transferred from NADPH via a FAD- and FMN-containing diflavin oxidoreductase. Together with the diflavin oxidoreductase, also required for the assembly of the diferric tyrosyl radical cofactor of ribonucleotide reductase (RNR), probably by providing electrons for reduction during radical cofactor maturation in the catalytic small subunit. This is Anamorsin homolog from Trichoplax adhaerens (Trichoplax reptans).